Reading from the N-terminus, the 332-residue chain is 4-hydroxyproline 2-epimerase 2 (332 aa).

The active-site Proton acceptor is the Cys89. Residues His222, Asp248, and 253-254 (GT) each bind substrate.

The protein belongs to the proline racemase family.

The enzyme catalyses trans-4-hydroxy-L-proline = cis-4-hydroxy-D-proline. Its function is as follows. Catalyzes the epimerization of trans-4-hydroxy-L-proline (t4LHyp) to cis-4-hydroxy-D-proline (c4DHyp). Is likely involved in a degradation pathway that converts t4LHyp to alpha-ketoglutarate. Displays no proline racemase activity. In Rhizobium rhizogenes (strain K84 / ATCC BAA-868) (Agrobacterium radiobacter), this protein is 4-hydroxyproline 2-epimerase 2.